A 147-amino-acid chain; its full sequence is Large ribosomal subunit protein uL11 (147 aa).

It belongs to the universal ribosomal protein uL11 family. Part of the ribosomal stalk of the 50S ribosomal subunit. Interacts with L10 and the large rRNA to form the base of the stalk. L10 forms an elongated spine to which L12 dimers bind in a sequential fashion forming a multimeric L10(L12)X complex. Post-translationally, one or more lysine residues are methylated.

In terms of biological role, forms part of the ribosomal stalk which helps the ribosome interact with GTP-bound translation factors. This Corynebacterium aurimucosum (strain ATCC 700975 / DSM 44827 / CIP 107346 / CN-1) (Corynebacterium nigricans) protein is Large ribosomal subunit protein uL11.